A 967-amino-acid polypeptide reads, in one-letter code: uncharacterized protein (967 aa).

Disordered stretches follow at residues Met1 to Arg23 and Phe41 to Thr72. The span at Lys14–Arg23 shows a compositional bias: basic and acidic residues. The segment covering Arg60–Thr72 has biased composition (polar residues). The residue at position 86 (Ser86) is a Phosphoserine. Disordered stretches follow at residues Ala135–Pro259, Ser271–Glu296, Asp380–Lys399, His437–Asp464, and Gly499–Ser544. Residues Glu162–Glu187 are compositionally biased toward polar residues. The span at His205–Leu218 shows a compositional bias: basic and acidic residues. The span at Arg221–Lys234 shows a compositional bias: basic residues. The span at Ser278–Pro294 shows a compositional bias: low complexity. Residues Thr382–Thr394 show a composition bias toward polar residues. The span at Gly499–His508 shows a compositional bias: basic residues. Residue Ser585 is modified to Phosphoserine. Disordered regions lie at residues Glu594–Asp665 and Asp681–His708. Residues Tyr608 to Arg622 are compositionally biased toward basic and acidic residues. Residues Ala686–Ser704 show a composition bias toward low complexity. Residue Pro728–Gly736 coordinates substrate.

The protein belongs to the inositol phosphokinase (IPK) family.

It is found in the cytoplasm. This is an uncharacterized protein from Schizosaccharomyces pombe (strain 972 / ATCC 24843) (Fission yeast).